The following is a 256-amino-acid chain: 5'-nucleotidase SurE (256 aa).

Aspartate 9, aspartate 10, serine 42, and asparagine 95 together coordinate a divalent metal cation.

It belongs to the SurE nucleotidase family. Requires a divalent metal cation as cofactor.

The protein resides in the cytoplasm. The enzyme catalyses a ribonucleoside 5'-phosphate + H2O = a ribonucleoside + phosphate. Its function is as follows. Nucleotidase that shows phosphatase activity on nucleoside 5'-monophosphates. This Campylobacter curvus (strain 525.92) protein is 5'-nucleotidase SurE.